Consider the following 605-residue polypeptide: Isocitrate dehydrogenase kinase/phosphatase (605 aa).

ATP contacts are provided by residues 327-333 (APGIKGL) and K348. D383 is a catalytic residue.

Belongs to the AceK family.

It localises to the cytoplasm. It catalyses the reaction L-seryl-[isocitrate dehydrogenase] + ATP = O-phospho-L-seryl-[isocitrate dehydrogenase] + ADP + H(+). Bifunctional enzyme which can phosphorylate or dephosphorylate isocitrate dehydrogenase (IDH) on a specific serine residue. This is a regulatory mechanism which enables bacteria to bypass the Krebs cycle via the glyoxylate shunt in response to the source of carbon. When bacteria are grown on glucose, IDH is fully active and unphosphorylated, but when grown on acetate or ethanol, the activity of IDH declines drastically concomitant with its phosphorylation. This is Isocitrate dehydrogenase kinase/phosphatase from Burkholderia lata (strain ATCC 17760 / DSM 23089 / LMG 22485 / NCIMB 9086 / R18194 / 383).